We begin with the raw amino-acid sequence, 476 residues long: ATP synthase subunit beta, mitochondrial (476 aa).

156–163 (GAGVGKTV) is an ATP binding site.

F-type ATP synthases have 2 components, the catalytic core F(1) and the membrane-embedded component F(0), linked together by a central stalk and a peripheral stalk. The central stalk, also called rotor shaft, is often seen as part of F(1). The peripheral stalk is seen as part of F(0). F(0) contains the membrane channel next to the rotor. F-type ATP synthases form dimers but each monomer functions independently in ATP generation. The dimer consists of 18 different polypeptides: ATP1 (subunit alpha, part of F(1), 3 molecules per monomer), ATP2 (subunit beta, part of F(1), 3 molecules per monomer), ATP3 (subunit gamma, part of the central stalk), ATP4 (subunit b, part of the peripheral stalk), ATP5/OSCP (subunit 5/OSCP, part of the peripheral stalk), ATP6 (subunit a, part of the peripheral stalk), ATP7 (subunit d, part of the peripheral stalk), ATP8 (subunit 8, part of the peripheral stalk), OLI1 (subunit c, part of the rotor, 10 molecules per monomer), ATP14 (subunit h, part of the peripheral stalk), ATP15 (subunit epsilon, part of the central stalk), ATP16 (subunit delta, part of the central stalk), ATP17 (subunit f, part of the peripheral stalk), ATP18 (subunit i/j, part of the peripheral stalk). Dimer-specific subunits are ATP19 (subunit k, at interface between monomers), ATP20 (subunit g, at interface between monomers), TIM11 (subunit e, at interface between monomers). Also contains subunit L.

The protein resides in the mitochondrion inner membrane. The enzyme catalyses ATP + H2O + 4 H(+)(in) = ADP + phosphate + 5 H(+)(out). Functionally, mitochondrial membrane ATP synthase (F(1)F(0) ATP synthase or Complex V) produces ATP from ADP in the presence of a proton gradient across the membrane which is generated by electron transport complexes of the respiratory chain. F-type ATP synthases consist of two structural domains, F(1) - containing the extramembraneous catalytic core, and F(0) - containing the membrane proton channel, linked together by a central stalk and a peripheral stalk. During catalysis, ATP synthesis in the catalytic domain of F(1) is coupled via a rotary mechanism of the central stalk subunits to proton translocation. Subunits alpha/ATP1 and beta/ATP2 form the catalytic core in F(1). Rotation of the central stalk against the surrounding alpha/ATP1(3)beta/ATP2(3) subunits leads to hydrolysis of ATP in three separate catalytic sites on the beta/ATP2 subunits. This chain is ATP synthase subunit beta, mitochondrial, found in Pichia angusta (Yeast).